Here is a 211-residue protein sequence, read N- to C-terminus: Stromal cell-derived factor 2 (211 aa).

An N-terminal signal peptide occupies residues 1 to 18 (MAVVPLLLLGGLWSAVGA). MIR domains lie at 21–75 (LGVV…IRGK), 83–138 (GTPI…VLCN), and 139–193 (GPYW…AMEG).

The protein localises to the secreted. The polypeptide is Stromal cell-derived factor 2 (SDF2) (Homo sapiens (Human)).